The sequence spans 962 residues: DNA primase (962 aa).

Residues 894–932 form a CHC2-type zinc finger; sequence CLRARHARSPPARTFVALSVDAHDRLCISLSQQCFATKC.

The protein belongs to the herpesviridae DNA primase family. As to quaternary structure, associates with the helicase and the primase-associated factor to form the helicase-primase factor.

The protein resides in the host nucleus. Essential component of the helicase/primase complex. Unwinds the DNA at the replication forks and generates single-stranded DNA for both leading and lagging strand synthesis. The primase initiates primer synthesis and thereby produces large amount of short RNA primers on the lagging strand that the polymerase elongates using dNTPs. The protein is DNA primase (UL52) of Sus scrofa (Pig).